Consider the following 244-residue polypeptide: Phosphoadenosine 5'-phosphosulfate reductase (244 aa).

Residue Cys-239 is the Nucleophile; cysteine thiosulfonate intermediate of the active site.

It belongs to the PAPS reductase family. CysH subfamily.

Its subcellular location is the cytoplasm. It carries out the reaction [thioredoxin]-disulfide + sulfite + adenosine 3',5'-bisphosphate + 2 H(+) = [thioredoxin]-dithiol + 3'-phosphoadenylyl sulfate. It functions in the pathway sulfur metabolism; hydrogen sulfide biosynthesis; sulfite from sulfate: step 3/3. Its function is as follows. Catalyzes the formation of sulfite from phosphoadenosine 5'-phosphosulfate (PAPS) using thioredoxin as an electron donor. The polypeptide is Phosphoadenosine 5'-phosphosulfate reductase (Salmonella heidelberg (strain SL476)).